Reading from the N-terminus, the 161-residue chain is Probable chemoreceptor glutamine deamidase CheD (161 aa).

It belongs to the CheD family.

It carries out the reaction L-glutaminyl-[protein] + H2O = L-glutamyl-[protein] + NH4(+). Functionally, probably deamidates glutamine residues to glutamate on methyl-accepting chemotaxis receptors (MCPs), playing an important role in chemotaxis. This Thermococcus kodakarensis (strain ATCC BAA-918 / JCM 12380 / KOD1) (Pyrococcus kodakaraensis (strain KOD1)) protein is Probable chemoreceptor glutamine deamidase CheD.